A 292-amino-acid chain; its full sequence is Probable septum site-determining protein MinC (292 aa).

The disordered stretch occupies residues 112-188 (DTAPPNDVAT…PQSSSALVIT (77 aa)). Positions 128–137 (EATAEAAAKA) are enriched in low complexity. A compositionally biased stretch (acidic residues) spans 140–150 (QDDEAYGEQAD). Over residues 171–185 (ANRPTATPPQSSSAL) the composition is skewed to polar residues.

Belongs to the MinC family. As to quaternary structure, interacts with MinD and FtsZ.

In terms of biological role, cell division inhibitor that blocks the formation of polar Z ring septums. Rapidly oscillates between the poles of the cell to destabilize FtsZ filaments that have formed before they mature into polar Z rings. Prevents FtsZ polymerization. This Bordetella bronchiseptica (strain ATCC BAA-588 / NCTC 13252 / RB50) (Alcaligenes bronchisepticus) protein is Probable septum site-determining protein MinC.